The following is a 185-amino-acid chain: MINDIQKRTAERMQKSIEALKHEFAKIRTGRAHPSLLEHIRVSYYGNEVPLTQVANVAVEDARSLAVTPWERNMVQAIEKAIMTSDLGLNPSTAGTVIRVPLPPLTEERRRDLIKVVRQEAENGRVAIRNIRRDANNELKAALKEKLISEDEDRRSQEQIQKTTDQFIKEIDKLLEQKEADLLAV.

Belongs to the RRF family.

It localises to the cytoplasm. Responsible for the release of ribosomes from messenger RNA at the termination of protein biosynthesis. May increase the efficiency of translation by recycling ribosomes from one round of translation to another. This is Ribosome-recycling factor from Methylococcus capsulatus (strain ATCC 33009 / NCIMB 11132 / Bath).